The primary structure comprises 2344 residues: MAAMSRLTGMTTAILPEKKPLNFFLDLRDKTPPCCIRATGKLAWPVFPGQNGKEGPLKTCNKCGKWLNGFGYFGLEDLGDVCLCSIAQQKHKFGPVCLCNRAYIHDCGRWRRRSRFLKHYKALNKVIPCAYQFDESFSTPVFEGEVDDLFVELGAPTSMGFMDKKLLKKGKKLMDKFVDVDEPCLTSRDASLLDSIASDTTIRAKLEEEYGVEMVQAARDRKDFMKNLRLALDNRPANPVTWYTKLGNITEKGKQWAKKVVYGACKVTDPLKTLASILLVGLHNVIAVDTTVMLSTFKPVNLLAILMDWTNDLAGFVTTLVRLLELYGVVQATVNLIIEGVKSFWDKVVCATERCFDLLKRLFDTFEDSVPTGPTAGCLIFMAFVFSTVVGYLPNNSVITTFMKGAGKLTTFAGVIGAIRTLWITINQHMVAKDLTSIQQKVMTVVKMANEAATLDQLEIVSCLCSDLENTLTNRCTLPSYNQHLGILNASQKVISDLHTMVLGKINMTKQRPQPVAVIFKGAPGIGKTYLVHRIARDLGCQHPSTINFGLDHFDSYTGEEVAIADEFNTCGDGESWVELFIQMVNTNPCPLNCDKAENKNKVFNSKYLLCTTNSNMILNATHPRAGAFYRRVMIVEARNKAVESWQATRHGSKPGKSCYSKDMSHLTFQVYPHNMPAPGFVFVGDKLVKSQVAPREYKYSELLDLIKSEHPDVASFDGANRFNFVYPDAQYDQALLMWKQYFVMYGCVARLAKNFVDDIPYNQVHISRASDPKIEGCVEYQCKFQHLWRMVPQFVLGCVNMTNQLGTPLTQQQLDRITNGVEGVTVTTVNNILAFHSQTTLINPSFLKLIWAVRKHLKGLSGVTKVAQFIWRVMTNPVDAYGSLVRTLTGAATFSDEPVSTTIICSNCTIQIHSCGGLLVRYSRDPVPVASDNVDRGDQGVDVFTDPNLISGFSWRQIAHLFVEVISHLCANHLVNLATMAALGPVATKAFQGVKGKTKRGRGARVNLGNDEYDEWQAARREFVNAHDMTAEEYLAMKNKAAMGSDDQDSVMFRSWWTRRQLRPDEDQVTIVGRGGVRNEVIRTRVRQTPKGPKTLDDGGFYDNDYEGLPGFMRHNGSGWMIHIGNGLYISNTHTARSSCSEIVTCSPTTDLCLVKGEAIRSVAQIAEGTPVCDWKKSPISTYGIKKTLSDSTKIDVLAYDGCTQTTHGDCGLPLYDSSGKIVAIHTGKLLGFSKMCTLIDLTITKGVYETSNFFCGEPIDYRGITAHRLVGAEPRPPVSGTRYAKVPGVPDEYKTGYRPANLGRSDPDSDKSLMNIAVKNLQVYQQEPKLDKVDEFIERAAADVLGYLRFLTKGERQANLNFKAAFNTLDLSTSCGPFVPGKKIDHVKDGVMDQVLAKHLYKCWSVANSGKALHHIYACGLKDELRPLDKVREGKKRLLWGCDVGVAVCRAAVFHNICYKLKMVARFGPIAVGVDMTSRDVDVIINNLTSKASDFLCLDYSKWDSTMSPCVVRLAIDILADCCEQTELTKSVVLTLKSHPMTILDAMIVQTKRGLPSGMPFTSVINSICHWLLWSAAVYKSCAEIGLHCSNLYEDAPFYTYGDDGVYAMTPMMVSLLPAIIENLRDYGLSPTAADKTEFIDVCPLNKISFLKRTFELTDIGWVSKLDKSSILRQLEWSKTTSRHMMIEETYDLAKEERGVQLEELQVPAAAHGQEFFNFVCKELERQQAYTQFSVYSYDAARKILADRKRVVSVVPDDEFVNVMEGKARTAPQGEAAGTATTASVPGTTTDGLDPGVVATTSVVTAENSSASIATAGIGGPPQQVDQQETWRTNFYYNDVFTWSVADAPGSILYTVQHSPQNNPFTAVLSQMYAGWAGGMQFRFIVAGSGVFGGRLVAAVIPPGIEIGPGLEVRQFPHVVIDARSLEPVTITMPDLRPNMYHPTGDPGLVPTLVLSVYNNLINPFGGSTSAIQVTVETRPSEDFEFVMIRAPSSKTVDSISPAGLLTTPVLTGVGNDNRWNGQIVGLQPVPGGFSTCNRHWNLNGSTYGWSSPRFADIDHRRGSASYPGSNATNVLQFWYANAGSAVDNPISQVAPDGFPDMSFVPFNGPGIPAAGWVGFGAIWNSNSGAPNVTTVQAYELGFATGAPGNLQPTTNTSGAQTVAKSIYAVVTGTAQNPAGLFVMASGVISTPNANAITYTPQPDRIVTTPGTPAAAPVGKNTPIMFASVVRRTGDVNATAGSANGTQYGTGSQPLPVTIGLSLNNYSSALMPGQFFVWQLTFASGFMEIGLSVDGYFYAGTGASTTLIDLTELIDVRPVGPRPSKSTLVFNLGGTANGFSYV.

In terms of domain architecture, SF3 helicase spans 492–653; the sequence is QKVISDLHTM…ESWQATRHGS (162 aa). 522-529 lines the ATP pocket; the sequence is GAPGIGKT. O-(5'-phospho-RNA)-tyrosine is present on tyrosine 1014. The residue at position 1014 (tyrosine 1014) is an O-UMP-tyrosine; transient. The 136-residue stretch at 1109–1244 folds into the Peptidase C24 domain; the sequence is GLPGFMRHNG…SKMCTLIDLT (136 aa). Active-site for 3CLpro activity residues include histidine 1135, aspartate 1152, and cysteine 1212. A RdRp catalytic domain is found at 1495 to 1619; sequence SDFLCLDYSK…AMTPMMVSLL (125 aa). Cysteine 1584 and cysteine 1591 form a disulfide bridge. Residues 1771–1794 form a disordered region; that stretch reads RTAPQGEAAGTATTASVPGTTTDG. Residues 1778 to 1794 show a composition bias toward low complexity; sequence AAGTATTASVPGTTTDG.

Homodimer. As to quaternary structure, homomultimer. Interacts with host type II histo-blood group structures antigens at the surface of target cells. Mn(2+) serves as cofactor. Post-translationally, specific enzymatic cleavages by its own cysteine protease yield mature proteins. The protease cleaves itself from the nascent polyprotein autocatalytically. Precursor p41 can be cleaved by viral 3CLpro into protein p19 and VPg, or cleaved by host protease into protein p23/2 and protein p18. VPg is uridylylated by the polymerase and is covalently attached to the 5'-end of the polyadenylated genomic and subgenomic RNAs. This uridylylated form acts as a nucleotide-peptide primer for the polymerase.

Its subcellular location is the host cytoplasm. The protein resides in the host endoplasmic reticulum. The protein localises to the virion. It catalyses the reaction a ribonucleoside 5'-triphosphate + H2O = a ribonucleoside 5'-diphosphate + phosphate + H(+). It carries out the reaction Endopeptidase with a preference for cleavage when the P1 position is occupied by Glu-|-Xaa and the P1' position is occupied by Gly-|-Yaa.. The enzyme catalyses RNA(n) + a ribonucleoside 5'-triphosphate = RNA(n+1) + diphosphate. In terms of biological role, together with NTPase and NS4, initiates the formation of the replication complex. Induces the proliferation of the host smooth ER membranes forming long tubular structures. These remodeled membranes probably form the viral factories that contain the replication complex. Functionally, displays NTPase activity, but no helicase activity. Induces the formation of convoluted membranes derived from the host ER. These remodeled membranes probably form the viral factories that contain the replication complex. Together with NS2 and NS4, initiates the formation of the replication complex. Its function is as follows. Probable key protein responsible for the formation of membrane alterations by the virus. Induces the formation of convoluted membranes derived from the host ER. These remodeled membranes probably form the viral factories that contain the replication complex. Together with NS2 and NTPase, initiates the formation of the replication complex. Viral genome-linked protein is covalently linked to the 5'-end of the positive-strand, negative-strand genomic RNAs and subgenomic RNA. Acts as a genome-linked replication primer. May recruit ribosome to viral RNA thereby promoting viral proteins translation. Interacts with host translation initiation complex to allow the translation of viral proteins. In terms of biological role, processes the polyprotein. 3CLpro-RdRp is first released by autocleavage, then all other proteins are cleaved. May cleave polyadenylate-binding protein thereby inhibiting cellular translation. Functionally, replicates genomic and antigenomic RNA by recognizing replications specific signals. Also transcribes a subgenomic mRNA by initiating RNA synthesis internally on antigenomic RNA. This sgRNA codes for structural proteins. Catalyzes the covalent attachment VPg with viral RNAs. Its function is as follows. Capsid protein VP60 self assembles to form an icosahedral capsid with a T=3 symmetry, about 35 nm in diameter, and consisting of 180 capsid proteins. A smaller form of capsid with a diameter of 23 nm might be capsid proteins assembled as icosahedron with T=1 symmetry. The capsid encapsulate VP2 proteins and genomic or subgenomic RNA. Attaches virion to target cells by binding histo-blood group antigens, inducing endocytosis of the viral particle. Acidification of the endosome induces conformational change of capsid protein thereby injecting virus genomic RNA into host cytoplasm. The sequence is that of Genome polyprotein from Oryctolagus cuniculus (Rabbit).